The chain runs to 358 residues: Peptide chain release factor 1 (358 aa).

At Gln233 the chain carries N5-methylglutamine.

Belongs to the prokaryotic/mitochondrial release factor family. Methylated by PrmC. Methylation increases the termination efficiency of RF1.

The protein resides in the cytoplasm. Its function is as follows. Peptide chain release factor 1 directs the termination of translation in response to the peptide chain termination codons UAG and UAA. In Staphylococcus aureus (strain MSSA476), this protein is Peptide chain release factor 1.